Here is a 160-residue protein sequence, read N- to C-terminus: MPSFDIISEVEAVELRNAVDNANRELSTRFDFRGVEASFDYKDESVKLTAQDDFQLKQMRDILRSNLTKRNVDPNAMEAKAADQTGRTWHQTVIFKQGIETDVAKKIVKLIKDNKVKVQASIQGDKVRVTGKKRDDLQAVMALVRSGELGQPFQFDNFRD.

The protein belongs to the YajQ family.

Its function is as follows. Nucleotide-binding protein. In Vibrio atlanticus (strain LGP32) (Vibrio splendidus (strain Mel32)), this protein is Nucleotide-binding protein VS_1405.